The sequence spans 123 residues: Small ribosomal subunit protein uS12 (123 aa).

The disordered stretch occupies residues 1-25 (MPTINQLIRKRRKSSLARKKSPALQ). The segment covering 8-21 (IRKRRKSSLARKKS) has biased composition (basic residues). Residue D89 is modified to 3-methylthioaspartic acid.

It belongs to the universal ribosomal protein uS12 family. As to quaternary structure, part of the 30S ribosomal subunit. Contacts proteins S8 and S17. May interact with IF1 in the 30S initiation complex.

With S4 and S5 plays an important role in translational accuracy. Functionally, interacts with and stabilizes bases of the 16S rRNA that are involved in tRNA selection in the A site and with the mRNA backbone. Located at the interface of the 30S and 50S subunits, it traverses the body of the 30S subunit contacting proteins on the other side and probably holding the rRNA structure together. The combined cluster of proteins S8, S12 and S17 appears to hold together the shoulder and platform of the 30S subunit. The sequence is that of Small ribosomal subunit protein uS12 from Chlamydia pneumoniae (Chlamydophila pneumoniae).